Here is a 343-residue protein sequence, read N- to C-terminus: 3-dehydroquinate synthase (343 aa).

Residues 61–66 (SGEKYK), 95–99 (GVISD), 119–120 (TT), Lys132, Lys141, and 159–162 (FLKT) contribute to the NAD(+) site. Residues Glu174, His231, and His248 each coordinate Zn(2+).

Belongs to the sugar phosphate cyclases superfamily. Dehydroquinate synthase family. Co(2+) is required as a cofactor. It depends on Zn(2+) as a cofactor. NAD(+) serves as cofactor.

Its subcellular location is the cytoplasm. It catalyses the reaction 7-phospho-2-dehydro-3-deoxy-D-arabino-heptonate = 3-dehydroquinate + phosphate. It participates in metabolic intermediate biosynthesis; chorismate biosynthesis; chorismate from D-erythrose 4-phosphate and phosphoenolpyruvate: step 2/7. Its function is as follows. Catalyzes the conversion of 3-deoxy-D-arabino-heptulosonate 7-phosphate (DAHP) to dehydroquinate (DHQ). In Helicobacter pylori (strain G27), this protein is 3-dehydroquinate synthase.